The following is a 130-amino-acid chain: Small ribosomal subunit protein uS9 (130 aa).

The tract at residues 98 to 130 (LKRAGFLTRDARKKERKKYGQPGARKRFQYSKR) is disordered. Over residues 111-130 (KERKKYGQPGARKRFQYSKR) the composition is skewed to basic residues.

This sequence belongs to the universal ribosomal protein uS9 family.

In Sorangium cellulosum (strain So ce56) (Polyangium cellulosum (strain So ce56)), this protein is Small ribosomal subunit protein uS9.